Here is a 263-residue protein sequence, read N- to C-terminus: Small ribosomal subunit protein bS1c (263 aa).

S1 motif domains lie at 27-96 (GDIV…LSIR), 114-178 (DSLL…LSHR), and 192-260 (GNII…LSMK).

This sequence belongs to the bacterial ribosomal protein bS1 family.

The protein resides in the plastid. The protein localises to the chloroplast. The polypeptide is Small ribosomal subunit protein bS1c (rps1) (Porphyra purpurea (Red seaweed)).